The sequence spans 80 residues: Small ribosomal subunit protein bS18 (80 aa).

This sequence belongs to the bacterial ribosomal protein bS18 family. As to quaternary structure, part of the 30S ribosomal subunit. Forms a tight heterodimer with protein bS6.

Its function is as follows. Binds as a heterodimer with protein bS6 to the central domain of the 16S rRNA, where it helps stabilize the platform of the 30S subunit. The sequence is that of Small ribosomal subunit protein bS18 from Staphylococcus carnosus (strain TM300).